We begin with the raw amino-acid sequence, 279 residues long: Fatty acid metabolism regulator protein (279 aa).

In terms of domain architecture, HTH gntR-type spans 6-74; the sequence is KSPAGFAEKY…HGKPTKVNQF (69 aa). A DNA-binding region (H-T-H motif) is located at residues 34–53; that stretch reads ERELSELIGVTRTTLREVLQ.

In terms of assembly, homodimer.

The protein resides in the cytoplasm. In terms of biological role, multifunctional regulator of fatty acid metabolism. In Vibrio cholerae serotype O1 (strain ATCC 39541 / Classical Ogawa 395 / O395), this protein is Fatty acid metabolism regulator protein.